We begin with the raw amino-acid sequence, 568 residues long: Multidrug and toxin extrusion protein 1 (568 aa).

Met1 is modified (N-acetylmethionine). The Cytoplasmic segment spans residues 1–36; sequence MEAPVELGPGGRQASPERRHWLRCLVLSDFREELRA. The chain crosses the membrane as a helical span at residues 37-57; sequence LLVLACPAFLAQLMVFLISFV. Over 58–71 the chain is Extracellular; the sequence is SSVFCGHLSKLELN. Residues 72 to 92 traverse the membrane as a helical segment; the sequence is AVTLAIAVINVMGVSVGFGLS. At 93–119 the chain is on the cytoplasmic side; it reads SACDTLISQTYGSRNLKHVGVILQRGS. Residues 120–140 traverse the membrane as a helical segment; it reads LILLLCCLPCWALFLNTQHIL. The Extracellular portion of the chain corresponds to 141 to 151; that stretch reads LLFRQDPAVSR. The chain crosses the membrane as a helical span at residues 152-172; sequence LTQTYVTIFIPALPATFLYTL. The Cytoplasmic portion of the chain corresponds to 173 to 175; it reads QVK. The chain crosses the membrane as a helical span at residues 176–196; sequence YLLNQGIVLPQVVTGVAANLV. The Extracellular segment spans residues 197–214; sequence NALANYLFVYQLHLGVMG. The chain crosses the membrane as a helical span at residues 215 to 235; sequence SALANTVAQFTLALLLFLYIL. Residues 236–255 are Cytoplasmic-facing; that stretch reads RSKVYQATWGGWSLECLQDW. Residues 256-278 traverse the membrane as a helical segment; sequence ASFFRLAIPSMLMLCMEWWAYEI. The Extracellular portion of the chain corresponds to 279 to 294; it reads GSFLSGILGMVELGAQ. Residues 295-315 form a helical membrane-spanning segment; it reads SVTYELAVIVYMIPMGLSVAV. Residues 316-335 are Cytoplasmic-facing; sequence NVRVGNALGAGNIEQAKKSS. The chain crosses the membrane as a helical span at residues 336–356; that stretch reads AVALLVTELIAVVFCVMLLSC. Residues 357–369 are Extracellular-facing; it reads KDLVGYIFTSDRD. A helical membrane pass occupies residues 370-390; the sequence is IIALVAQVTPIYAVSHLFESL. The Cytoplasmic segment spans residues 391 to 407; it reads AGTSGGILRGSGNQKFG. A helical transmembrane segment spans residues 408 to 430; the sequence is AIVNAIGYYVVGLPIGIALMFAA. The Extracellular portion of the chain corresponds to 431 to 433; the sequence is KLG. A helical transmembrane segment spans residues 434–456; that stretch reads VIGLWLGIVVCAVSQAVCFLGFI. The Cytoplasmic segment spans residues 457-544; that stretch reads ARLNWTKACQ…LSGKQLALRR (88 aa). The helical transmembrane segment at 545–565 threads the bilayer; the sequence is GLLLLGVILVLLAGILVKVYV. Residues 566-568 are Extracellular-facing; sequence RTQ.

It belongs to the multi antimicrobial extrusion (MATE) (TC 2.A.66.1) family. In terms of tissue distribution, predominantly expressed in kidney and liver.

It is found in the cell membrane. Its subcellular location is the apical cell membrane. It catalyses the reaction thiamine(out) + H(+)(in) = thiamine(in) + H(+)(out). It carries out the reaction estrone 3-sulfate(in) + H(+)(out) = estrone 3-sulfate(out) + H(+)(in). The enzyme catalyses creatinine(in) + H(+)(out) = creatinine(out) + H(+)(in). The catalysed reaction is agmatine(in) + H(+)(out) = agmatine(out) + H(+)(in). Functionally, multidrug efflux pump that functions as a H(+)/organic cation antiporter. Plays a physiological role in the excretion of cationic compounds including endogenous metabolites, drugs, toxins through the kidney and liver, into urine and bile respectively. Mediates the efflux of endogenous compounds such as creatinine, vitamin B1/thiamine, agmatine and estrone-3-sulfate. May also contribute to regulate the transport of cationic compounds in testis across the blood-testis-barrier. The sequence is that of Multidrug and toxin extrusion protein 1 (SLC47A1) from Oryctolagus cuniculus (Rabbit).